Reading from the N-terminus, the 256-residue chain is Sugar fermentation stimulation protein homolog (256 aa).

Positions 128–141 (TGSTDTSFSGTPPT) are enriched in low complexity. Residues 128–149 (TGSTDTSFSGTPPTNTEPANTK) form a disordered region.

Belongs to the SfsA family.

The sequence is that of Sugar fermentation stimulation protein homolog from Shewanella sediminis (strain HAW-EB3).